A 147-amino-acid polypeptide reads, in one-letter code: UPF0260 protein Ent638_2368 (147 aa).

Belongs to the UPF0260 family.

This chain is UPF0260 protein Ent638_2368, found in Enterobacter sp. (strain 638).